Consider the following 299-residue polypeptide: Glycine--tRNA ligase alpha subunit (299 aa).

This sequence belongs to the class-II aminoacyl-tRNA synthetase family. Tetramer of two alpha and two beta subunits.

The protein resides in the cytoplasm. The catalysed reaction is tRNA(Gly) + glycine + ATP = glycyl-tRNA(Gly) + AMP + diphosphate. This is Glycine--tRNA ligase alpha subunit from Dictyoglomus thermophilum (strain ATCC 35947 / DSM 3960 / H-6-12).